A 133-amino-acid polypeptide reads, in one-letter code: ATP synthase epsilon chain (133 aa).

Belongs to the ATPase epsilon chain family. As to quaternary structure, F-type ATPases have 2 components, CF(1) - the catalytic core - and CF(0) - the membrane proton channel. CF(1) has five subunits: alpha(3), beta(3), gamma(1), delta(1), epsilon(1). CF(0) has three main subunits: a, b and c.

The protein localises to the cell membrane. Functionally, produces ATP from ADP in the presence of a proton gradient across the membrane. The protein is ATP synthase epsilon chain (atpC) of Alkalihalophilus pseudofirmus (strain ATCC BAA-2126 / JCM 17055 / OF4) (Bacillus pseudofirmus).